A 208-amino-acid polypeptide reads, in one-letter code: Uracil phosphoribosyltransferase (208 aa).

Residues Arg78, Arg103, and 130–138 (DPMFATGGT) each bind 5-phospho-alpha-D-ribose 1-diphosphate. Uracil contacts are provided by residues Ile193 and 198–200 (GDA). Asp199 lines the 5-phospho-alpha-D-ribose 1-diphosphate pocket.

It belongs to the UPRTase family. Mg(2+) serves as cofactor.

It carries out the reaction UMP + diphosphate = 5-phospho-alpha-D-ribose 1-diphosphate + uracil. It participates in pyrimidine metabolism; UMP biosynthesis via salvage pathway; UMP from uracil: step 1/1. Its activity is regulated as follows. Allosterically activated by GTP. Catalyzes the conversion of uracil and 5-phospho-alpha-D-ribose 1-diphosphate (PRPP) to UMP and diphosphate. In Campylobacter concisus (strain 13826), this protein is Uracil phosphoribosyltransferase.